A 268-amino-acid chain; its full sequence is Tryptophan synthase alpha chain (268 aa).

Active-site proton acceptor residues include E49 and D60.

This sequence belongs to the TrpA family. Tetramer of two alpha and two beta chains.

It carries out the reaction (1S,2R)-1-C-(indol-3-yl)glycerol 3-phosphate + L-serine = D-glyceraldehyde 3-phosphate + L-tryptophan + H2O. Its pathway is amino-acid biosynthesis; L-tryptophan biosynthesis; L-tryptophan from chorismate: step 5/5. The alpha subunit is responsible for the aldol cleavage of indoleglycerol phosphate to indole and glyceraldehyde 3-phosphate. In Escherichia coli (strain SE11), this protein is Tryptophan synthase alpha chain.